The sequence spans 122 residues: Large ribosomal subunit protein uL14c (122 aa).

It belongs to the universal ribosomal protein uL14 family. As to quaternary structure, part of the 50S ribosomal subunit.

Its subcellular location is the plastid. The protein localises to the chloroplast. Functionally, binds to 23S rRNA. The polypeptide is Large ribosomal subunit protein uL14c (Chaetosphaeridium globosum (Charophycean green alga)).